Consider the following 162-residue polypeptide: G/U mismatch-specific DNA glycosylase (162 aa).

It belongs to the uracil-DNA glycosylase (UDG) superfamily. TDG/mug family. Binds DNA as a monomer.

The protein resides in the cytoplasm. It catalyses the reaction Specifically hydrolyzes mismatched double-stranded DNA and polynucleotides, releasing free uracil.. Its function is as follows. Excises ethenocytosine and uracil, which can arise by alkylation or deamination of cytosine, respectively, from the corresponding mispairs with guanine in ds-DNA. It is capable of hydrolyzing the carbon-nitrogen bond between the sugar-phosphate backbone of the DNA and the mispaired base. The complementary strand guanine functions in substrate recognition. Required for DNA damage lesion repair in stationary-phase cells. In Serratia proteamaculans (strain 568), this protein is G/U mismatch-specific DNA glycosylase.